Consider the following 177-residue polypeptide: Nucleoside triphosphate/diphosphate phosphatase (177 aa).

Residue Arg23 is the Proton donor of the active site. Residues Asn87, Asp103, Asp105, Asp107, Asp120, and Glu123 each coordinate Mg(2+).

Belongs to the Ntdp family. Mg(2+) is required as a cofactor.

It catalyses the reaction a ribonucleoside 5'-triphosphate + H2O = a ribonucleoside 5'-diphosphate + phosphate + H(+). The catalysed reaction is a ribonucleoside 5'-diphosphate + H2O = a ribonucleoside 5'-phosphate + phosphate + H(+). Has nucleoside phosphatase activity towards nucleoside triphosphates and nucleoside diphosphates. In Streptococcus pneumoniae serotype 2 (strain D39 / NCTC 7466), this protein is Nucleoside triphosphate/diphosphate phosphatase.